Here is a 194-residue protein sequence, read N- to C-terminus: MISLLKKLYFTFSRSSRIIITLVIIDQLTKWWFINNLRWKPGLMLKVTSVLNMVYTWNYGISFGLMREYYQYSNTIFLITNMIIVCYLYYLMICSKTIGSFAGYSFVIGGAIGNLIDRFCRGAVFDFIHFHYRNYSFPVFNLADCFITLGVIILMEDYFSTKKVIEETSKGNYDNLQIEVMAEKIRHTDHDSKI.

The next 2 membrane-spanning stretches (helical) occupy residues 75-95 (TIFLITNMIIVCYLYYLMICS) and 97-117 (TIGSFAGYSFVIGGAIGNLID). Catalysis depends on residues Asp-126 and Asp-144. Residues 135 to 155 (YSFPVFNLADCFITLGVIILM) traverse the membrane as a helical segment.

It belongs to the peptidase A8 family.

It is found in the cell inner membrane. It catalyses the reaction Release of signal peptides from bacterial membrane prolipoproteins. Hydrolyzes -Xaa-Yaa-Zaa-|-(S,diacylglyceryl)Cys-, in which Xaa is hydrophobic (preferably Leu), and Yaa (Ala or Ser) and Zaa (Gly or Ala) have small, neutral side chains.. Its pathway is protein modification; lipoprotein biosynthesis (signal peptide cleavage). This protein specifically catalyzes the removal of signal peptides from prolipoproteins. The chain is Lipoprotein signal peptidase from Rickettsia prowazekii (strain Madrid E).